The chain runs to 209 residues: uncharacterized protein (209 aa).

The segment covering 1-15 has biased composition (basic and acidic residues); it reads MHRIDTKTAQKDKFG. The disordered stretch occupies residues 1-34; the sequence is MHRIDTKTAQKDKFGAGKNGFTRGNPQTGTPATD. Residues 22-31 are compositionally biased toward polar residues; sequence TRGNPQTGTP.

It to E.coli YfdL and M.jannaschii MJ0347.

This is an uncharacterized protein from Escherichia coli (strain K12).